The primary structure comprises 76 residues: Alpha/kappa-conotoxin-like fe14.2 (76 aa).

A signal peptide spans Met1 to Pro24. The propeptide occupies Gly25 to Arg39. 2 cysteine pairs are disulfide-bonded: Cys46-Cys61 and Cys50-Cys63. Residue Arg64 is modified to Arginine amide. The propeptide occupies Gly65–Val76.

This sequence belongs to the conotoxin J superfamily. As to expression, expressed by the venom duct.

Its subcellular location is the secreted. Its function is as follows. Highly inhibits both nicotinic acetylcholine receptors (neuronal (alpha-3/beta-4) and muscular (alpha-1/beta-1/epsilon/delta) subtypes) and the voltage-gated potassium channel Kv1.6/KCNA6 subtype. The polypeptide is Alpha/kappa-conotoxin-like fe14.2 (Conus ferrugineus (Cone snail)).